The primary structure comprises 258 residues: Ribosomal RNA small subunit methyltransferase A (258 aa).

S-adenosyl-L-methionine is bound by residues His-13, Leu-15, Gly-40, Glu-62, Asp-87, and Asn-108.

Belongs to the class I-like SAM-binding methyltransferase superfamily. rRNA adenine N(6)-methyltransferase family. RsmA subfamily.

The protein localises to the cytoplasm. The enzyme catalyses adenosine(1518)/adenosine(1519) in 16S rRNA + 4 S-adenosyl-L-methionine = N(6)-dimethyladenosine(1518)/N(6)-dimethyladenosine(1519) in 16S rRNA + 4 S-adenosyl-L-homocysteine + 4 H(+). Functionally, specifically dimethylates two adjacent adenosines (A1518 and A1519) in the loop of a conserved hairpin near the 3'-end of 16S rRNA in the 30S particle. May play a critical role in biogenesis of 30S subunits. This chain is Ribosomal RNA small subunit methyltransferase A, found in Sulfurihydrogenibium sp. (strain YO3AOP1).